The primary structure comprises 79 residues: MSLTVKCPTCQAPVTWSADSEFKPFCSERCKLIDLGDWASEKNVIPVKSEFDPEMLDQLGYDEADFFLDENPFKDDKNQ.

Positions 7, 10, 26, and 30 each coordinate Zn(2+).

It belongs to the DNA gyrase inhibitor YacG family. In terms of assembly, interacts with GyrB. Requires Zn(2+) as cofactor.

Its function is as follows. Inhibits all the catalytic activities of DNA gyrase by preventing its interaction with DNA. Acts by binding directly to the C-terminal domain of GyrB, which probably disrupts DNA binding by the gyrase. The chain is DNA gyrase inhibitor YacG from Shewanella halifaxensis (strain HAW-EB4).